The following is a 689-amino-acid chain: Glycine--tRNA ligase beta subunit (689 aa).

The protein belongs to the class-II aminoacyl-tRNA synthetase family. As to quaternary structure, tetramer of two alpha and two beta subunits.

The protein resides in the cytoplasm. It catalyses the reaction tRNA(Gly) + glycine + ATP = glycyl-tRNA(Gly) + AMP + diphosphate. The polypeptide is Glycine--tRNA ligase beta subunit (Glaesserella parasuis serovar 5 (strain SH0165) (Haemophilus parasuis)).